A 201-amino-acid polypeptide reads, in one-letter code: Holliday junction resolvase RecU (201 aa).

Mg(2+) contacts are provided by T87, D89, E102, and Q121.

The protein belongs to the RecU family. The cofactor is Mg(2+).

It is found in the cytoplasm. The enzyme catalyses Endonucleolytic cleavage at a junction such as a reciprocal single-stranded crossover between two homologous DNA duplexes (Holliday junction).. Its function is as follows. Endonuclease that resolves Holliday junction intermediates in genetic recombination. Cleaves mobile four-strand junctions by introducing symmetrical nicks in paired strands. Promotes annealing of linear ssDNA with homologous dsDNA. Required for DNA repair, homologous recombination and chromosome segregation. This is Holliday junction resolvase RecU from Listeria monocytogenes serotype 4b (strain F2365).